The chain runs to 338 residues: DNA-directed RNA polymerase subunit alpha (338 aa).

The interval 1 to 234 (MIHKNWAELI…DQLSIFVNFE (234 aa)) is alpha N-terminal domain (alpha-NTD). An alpha C-terminal domain (alpha-CTD) region spans residues 250 to 338 (FNPLLLKKVD…DLAKRFEDQF (89 aa)).

It belongs to the RNA polymerase alpha chain family. As to quaternary structure, homodimer. The RNAP catalytic core consists of 2 alpha, 1 beta, 1 beta' and 1 omega subunit. When a sigma factor is associated with the core the holoenzyme is formed, which can initiate transcription.

It carries out the reaction RNA(n) + a ribonucleoside 5'-triphosphate = RNA(n+1) + diphosphate. Its function is as follows. DNA-dependent RNA polymerase catalyzes the transcription of DNA into RNA using the four ribonucleoside triphosphates as substrates. The sequence is that of DNA-directed RNA polymerase subunit alpha from Cereibacter sphaeroides (strain ATCC 17025 / ATH 2.4.3) (Rhodobacter sphaeroides).